The primary structure comprises 304 residues: Glycine--tRNA ligase alpha subunit (304 aa).

The protein belongs to the class-II aminoacyl-tRNA synthetase family. As to quaternary structure, tetramer of two alpha and two beta subunits.

The protein resides in the cytoplasm. The enzyme catalyses tRNA(Gly) + glycine + ATP = glycyl-tRNA(Gly) + AMP + diphosphate. This is Glycine--tRNA ligase alpha subunit from Yersinia pseudotuberculosis serotype O:1b (strain IP 31758).